The chain runs to 421 residues: 3-phosphoshikimate 1-carboxyvinyltransferase (421 aa).

3-phosphoshikimate-binding residues include K19, S20, and R24. K19 contributes to the phosphoenolpyruvate binding site. Residues G88 and R116 each coordinate phosphoenolpyruvate. 3-phosphoshikimate contacts are provided by S160, Q162, D307, and K334. A phosphoenolpyruvate-binding site is contributed by Q162. The active-site Proton acceptor is the D307. Phosphoenolpyruvate is bound by residues R338 and R380.

This sequence belongs to the EPSP synthase family. Monomer.

The protein localises to the cytoplasm. The catalysed reaction is 3-phosphoshikimate + phosphoenolpyruvate = 5-O-(1-carboxyvinyl)-3-phosphoshikimate + phosphate. The protein operates within metabolic intermediate biosynthesis; chorismate biosynthesis; chorismate from D-erythrose 4-phosphate and phosphoenolpyruvate: step 6/7. Functionally, catalyzes the transfer of the enolpyruvyl moiety of phosphoenolpyruvate (PEP) to the 5-hydroxyl of shikimate-3-phosphate (S3P) to produce enolpyruvyl shikimate-3-phosphate and inorganic phosphate. The protein is 3-phosphoshikimate 1-carboxyvinyltransferase of Thermotoga neapolitana (strain ATCC 49049 / DSM 4359 / NBRC 107923 / NS-E).